We begin with the raw amino-acid sequence, 1394 residues long: Cyclic nucleotide-gated channel beta-1 (1394 aa).

3 disordered regions span residues 1–95 (MLGW…AHSS), 112–253 (VPQP…QDSA), and 271–675 (VIRG…SQNS). The Cytoplasmic portion of the chain corresponds to 1–762 (MLGWVQRVLP…WKKYQFPQSI (762 aa)). 2 stretches are compositionally biased toward polar residues: residues 68 to 86 (PQGT…QAQV) and 116 to 125 (AHSSRPSQNI). 2 stretches are compositionally biased toward basic and acidic residues: residues 300 to 312 (EESH…VDPH) and 336 to 355 (DEEK…RIQE). Acidic residues predominate over residues 356-387 (EKEDEEEEKEDGEEEEEEGREKEEEEGEEKEE). A compositionally biased stretch (basic and acidic residues) spans 388-408 (EEGREKEEEEGEKKEEEGREK). Over residues 409–418 (EEEEGGEKED) the composition is skewed to acidic residues. Basic and acidic residues predominate over residues 419–433 (EEGREKEEEEGRGKE). Composition is skewed to acidic residues over residues 452-464 (EGRE…EEEQ) and 481-490 (DRSEESETQD). Low complexity-rich tracts occupy residues 493-508 (EVGG…GAQA) and 529-554 (EVGG…AQDQ). Polar residues predominate over residues 654–675 (DPTSPQGTDDQDRATSTASQNS). A calmodulin-binding CaM1 region spans residues 671-681 (ASQNSAIINDR). An IQ-like motif is present at residues 682–692 (LQELVKLFKER). Residues 699 to 732 (KLIDPDVTSDEESPKPSPAKKAPEPAPEVKPAEA) form a disordered region. The chain crosses the membrane as a helical span at residues 763–793 (DPLTNLMYILWLFFVVLAWNWNCWLIPVRWA). At 794 to 798 (FPYQT) the chain is on the extracellular side. A helical transmembrane segment spans residues 799 to 825 (PDNIHLWLLMDYLCDLIYLLDITVFQM). At 826–837 (RLQFVRGGDIIT) the chain is on the cytoplasmic side. Residues 838–861 (DKKEMRNNYVKSQRFKMDMLCLLP) traverse the membrane as a helical segment. Over 862–872 (LDLLYLKFGVN) the chain is Extracellular. Residues 873–887 (PLLRLPRCLKYMAFF) form a helical membrane-spanning segment. Over 888 to 900 (EFNNRLESILSKA) the chain is Cytoplasmic. The tract at residues 900 to 999 (AYVYRVIRTT…IGQMRDVVGA (100 aa)) is ion conduction pathway. Residues 901–922 (YVYRVIRTTAYLLYSLHLNSCL) traverse the membrane as a helical segment. Topologically, residues 923 to 931 (YYWASAYEG) are extracellular. Helical transmembrane passes span 932–974 (LGST…EIVF) and 975–1002 (QGLN…AATA). The selectivity filter stretch occupies residues 959 to 962 (TIGG). At 1003-1394 (GQTYYRSCMD…EEARKEKEEE (392 aa)) the chain is on the cytoplasmic side. The segment at 1082–1198 (RQMIFDMLKR…LLRKKARRML (117 aa)) is cyclic nucleotide-binding domain. Residues Gly-1143, Glu-1144, Ser-1146, Arg-1156, and Thr-1157 each coordinate 3',5'-cyclic GMP. Residue Arg-1156 coordinates 3',5'-cyclic AMP. Residues 1261–1267 (QQQLLEQ) are calmodulin-binding CaM2. The tract at residues 1265 to 1394 (LEQAKSSEDA…EEARKEKEEE (130 aa)) is disordered. Residues 1285–1326 (EQPPRPEPPAPEAPAPEPTAPEPLAPEAPAPEAPAPSSPPPA) are compositionally biased toward pro residues. Basic and acidic residues-rich tracts occupy residues 1329–1345 (ERPE…EHPV) and 1364–1376 (VPEK…KKEE).

Belongs to the cyclic nucleotide-gated cation channel (TC 1.A.1.5) family. CNGB1 subfamily. In terms of assembly, the rod cyclic nucleotide-gated channel is a heterotetramer composed of CNGA1 and CNGB1 subunits with 3:1 stoichiometry. CNGA1:CNGB1 channel binds Ca(2+)-bound CALM1 via CaM1 and CaM2 regions of the CNGB1 subunit; this interaction modulates the affinity of the channel for cNMPs in response to intracellular Ca(2+) levels. The olfactory cyclic nucleotide-gated channel is a heterotetramer composed of CNGA2, CNGA4 and CNGB1 subunits with 2:1:1 stoichiometry. As to expression, retina, testis, kidney, heart and brain.

Its subcellular location is the membrane. It catalyses the reaction Ca(2+)(in) = Ca(2+)(out). It carries out the reaction Na(+)(in) = Na(+)(out). The enzyme catalyses K(+)(in) = K(+)(out). The catalysed reaction is NH4(+)(in) = NH4(+)(out). It catalyses the reaction Rb(+)(in) = Rb(+)(out). It carries out the reaction Li(+)(in) = Li(+)(out). The enzyme catalyses Cs(+)(in) = Cs(+)(out). Its function is as follows. Pore-forming subunit of the rod cyclic nucleotide-gated channel. Mediates rod photoresponses at dim light converting transient changes in intracellular cGMP levels into electrical signals. In the dark, cGMP levels are high and keep the channel open enabling a steady inward current carried by Na(+) and Ca(2+) ions that leads to membrane depolarization and neurotransmitter release from synaptic terminals. Upon photon absorption cGMP levels decline leading to channel closure and membrane hyperpolarization that ultimately slows neurotransmitter release and signals the presence of light, the end point of the phototransduction cascade. Pore-forming subunit of the olfactory cyclic nucleotide-gated channel. Operates in the cilia of olfactory sensory neurons where chemical stimulation of the odorant is converted to an electrical signal. Mediates odorant-induced cAMP-dependent Ca(2+) influx triggering neuron depolarization. The rise of intracellular Ca(2+) levels potentiates the olfactory response by activating Ca(2+)-dependent Cl(-) channels, but it also serves as a negative feedback signal to desensitize the channel for rapid adaptation to odorants. Conducts cGMP- and cAMP-gated ion currents, with permeability for monovalent and divalent cations. The selectivity for Ca(2+) over Na(+) increases with cGMP concentrations, whereas the selectivity among monovalent ions is independent of the cGMP levels. The polypeptide is Cyclic nucleotide-gated channel beta-1 (Bos taurus (Bovine)).